Here is a 404-residue protein sequence, read N- to C-terminus: Cysteine desulfurase IscS (404 aa).

Pyridoxal 5'-phosphate-binding positions include 75–76 (AT), N155, Q183, and 203–205 (SGH). K206 is modified (N6-(pyridoxal phosphate)lysine). Residue T243 participates in pyridoxal 5'-phosphate binding. C328 (cysteine persulfide intermediate) is an active-site residue. C328 is a binding site for [2Fe-2S] cluster.

The protein belongs to the class-V pyridoxal-phosphate-dependent aminotransferase family. NifS/IscS subfamily. In terms of assembly, homodimer. Forms a heterotetramer with IscU, interacts with other sulfur acceptors. Pyridoxal 5'-phosphate is required as a cofactor.

The protein resides in the cytoplasm. It carries out the reaction (sulfur carrier)-H + L-cysteine = (sulfur carrier)-SH + L-alanine. It participates in cofactor biosynthesis; iron-sulfur cluster biosynthesis. Its function is as follows. Master enzyme that delivers sulfur to a number of partners involved in Fe-S cluster assembly, tRNA modification or cofactor biosynthesis. Catalyzes the removal of elemental sulfur atoms from cysteine to produce alanine. Functions as a sulfur delivery protein for Fe-S cluster synthesis onto IscU, an Fe-S scaffold assembly protein, as well as other S acceptor proteins. In Shewanella halifaxensis (strain HAW-EB4), this protein is Cysteine desulfurase IscS.